A 299-amino-acid polypeptide reads, in one-letter code: Diphthine methyl ester synthase 1 (299 aa).

S-adenosyl-L-methionine contacts are provided by residues L9, D85, G88, 113–114 (SV), L164, L222, and H247.

The protein belongs to the diphthine synthase family.

The protein resides in the cytoplasm. The catalysed reaction is 2-[(3S)-amino-3-carboxypropyl]-L-histidyl-[translation elongation factor 2] + 4 S-adenosyl-L-methionine = diphthine methyl ester-[translation elongation factor 2] + 4 S-adenosyl-L-homocysteine + 3 H(+). It functions in the pathway protein modification; peptidyl-diphthamide biosynthesis. Functionally, S-adenosyl-L-methionine-dependent methyltransferase that catalyzes four methylations of the modified target histidine residue in translation elongation factor 2 (EF-2), to form an intermediate called diphthine methyl ester. The four successive methylation reactions represent the second step of diphthamide biosynthesis. This chain is Diphthine methyl ester synthase 1 (DPH5), found in Candida albicans (strain SC5314 / ATCC MYA-2876) (Yeast).